A 325-amino-acid polypeptide reads, in one-letter code: GMP reductase (325 aa).

The active-site Thioimidate intermediate is C173. 202–225 (IIADGGIRSHGDIAKSVRFGATMV) is an NADP(+) binding site.

It belongs to the IMPDH/GMPR family. GuaC type 2 subfamily.

The catalysed reaction is IMP + NH4(+) + NADP(+) = GMP + NADPH + 2 H(+). In terms of biological role, catalyzes the irreversible NADPH-dependent deamination of GMP to IMP. It functions in the conversion of nucleobase, nucleoside and nucleotide derivatives of G to A nucleotides, and in maintaining the intracellular balance of A and G nucleotides. This Acidovorax sp. (strain JS42) protein is GMP reductase.